Reading from the N-terminus, the 393-residue chain is Serpin-Z4 (393 aa).

The tract at residues 342–366 (GTEAAAVSVASMTKDMLLMGDFVAD) is RCL.

Belongs to the serpin family.

In terms of biological role, probable serine protease inhibitor. The sequence is that of Serpin-Z4 from Arabidopsis thaliana (Mouse-ear cress).